The sequence spans 152 residues: Deoxyuridine 5'-triphosphate nucleotidohydrolase (152 aa).

Residues 71–73, asparagine 84, 88–90, and methionine 98 each bind substrate; these read RSG and LID.

The protein belongs to the dUTPase family. It depends on Mg(2+) as a cofactor.

It carries out the reaction dUTP + H2O = dUMP + diphosphate + H(+). It functions in the pathway pyrimidine metabolism; dUMP biosynthesis; dUMP from dCTP (dUTP route): step 2/2. Functionally, this enzyme is involved in nucleotide metabolism: it produces dUMP, the immediate precursor of thymidine nucleotides and it decreases the intracellular concentration of dUTP so that uracil cannot be incorporated into DNA. This chain is Deoxyuridine 5'-triphosphate nucleotidohydrolase, found in Pectobacterium carotovorum subsp. carotovorum (strain PC1).